The following is a 356-amino-acid chain: MIVTGSQVRQGLNTWFVLPLRRTAIGLGCAGVATLFSACGQTQALITNQTIQGFVDQVVVPSYVSVAAGATQLEQALQTYQQAPTAANLEAARQAWRVARDRWEQTECFAFGPADSEGFDGAMDTWPIDRQGLKTAAAQPVEQREDSRKGFHAIEELLFAATEPTLSDRQHLVILATDLTKQAQGLVTRWQQASDQPAYRSVLLSAGSTDSAYPTLNAAGTEIVQGLVDSLSEVASEKIGGPLETQEPDRFESFVSRNTLSDLRNNWTGAWNVYRGQRSDGVAAGSLQQRLQQQHPVIAQQLDQQFATARQALWAIPEPIETNLASPRGKVAVLTAQTAIAAVSDTLERQVLPLVQ.

A signal peptide spans M1–A44. 2 hydrophilic regions span residues Q75–E145 and G240–R310.

As to quaternary structure, the iron-regulated protein A is one unit of the protein complex CPVI-4, which is synthesized under iron deficient conditions.

The protein resides in the cell inner membrane. IrpA occurs under iron-deficient growth conditions in cyanobacterium Synechococcus and disappears in cells recovering from iron starvation. It seems to be involved in iron acquisition, uptake or storage. The chain is Iron-regulated protein A (irpA) from Synechococcus elongatus (strain ATCC 33912 / PCC 7942 / FACHB-805) (Anacystis nidulans R2).